A 366-amino-acid polypeptide reads, in one-letter code: 3-dehydroquinate synthase (366 aa).

Residues 74–79 (SGEAAK), 108–112 (GVVGD), 132–133 (TT), lysine 144, lysine 153, and 171–174 (FLRT) contribute to the NAD(+) site. Residues glutamate 186, histidine 249, and histidine 266 each coordinate Zn(2+).

The protein belongs to the sugar phosphate cyclases superfamily. Dehydroquinate synthase family. Requires Co(2+) as cofactor. Zn(2+) is required as a cofactor. NAD(+) serves as cofactor.

It is found in the cytoplasm. It catalyses the reaction 7-phospho-2-dehydro-3-deoxy-D-arabino-heptonate = 3-dehydroquinate + phosphate. Its pathway is metabolic intermediate biosynthesis; chorismate biosynthesis; chorismate from D-erythrose 4-phosphate and phosphoenolpyruvate: step 2/7. Functionally, catalyzes the conversion of 3-deoxy-D-arabino-heptulosonate 7-phosphate (DAHP) to dehydroquinate (DHQ). This chain is 3-dehydroquinate synthase, found in Geobacillus thermodenitrificans (strain NG80-2).